Reading from the N-terminus, the 315-residue chain is MSNLSVGQIIMDAQRMASRVKDLDALGTALLEEAENNNRLVESLRQYQDDIESLNRISNNKTNADMVNRIQQQNINSSEILKENRELKIFIEDYERAMELMMQKYREHTVSKVLDSKFSFKELYNERMWQVIREQREKINEMAAVMQLAASVDDGVVQRELQTISQLRLENETLRELLQISKQYGSSQRPIRESDHLLEEKAVQTDSTADDSADDLSISGASVENMNNNSVIQMYSSPEQPAKVAGTTNSFNTAPVHSQSETQAPSVTLETAPPGEEPLANDNNNGPAVNTTSAPPPATTSNESVEDQATVAPAT.

2 coiled-coil regions span residues 32–99 (EEAE…RAME) and 156–183 (VVQR…ISKQ). 2 disordered regions span residues 201-222 (KAVQ…SGAS) and 238-315 (PEQP…APAT). The segment covering 246–269 (GTTNSFNTAPVHSQSETQAPSVTL) has biased composition (polar residues).

This sequence belongs to the SIKE family.

This Drosophila melanogaster (Fruit fly) protein is FGFR1 oncogene partner 2 homolog.